The chain runs to 338 residues: Terpene synthase 1 (338 aa).

The DDxx(x)D/E motif motif lies at 80–85 (DDALDS). Positions 220–228 (NDLVSYEKE) match the NDxxSxxxD/E motif motif.

Belongs to the terpene synthase family.

The catalysed reaction is (2E,6E)-farnesyl diphosphate = (2S,3R,6S,9S)-(-)-protoillud-7-ene + diphosphate. In terms of biological role, terpene synthase that converts its substrate farnesyl diphosphate (FPP) into the sesquiterpene protoillud-7-ene. The protein is Terpene synthase 1 of Cavenderia fasciculata (Slime mold).